Consider the following 979-residue polypeptide: Zinc finger BED domain-containing protein 6 (979 aa).

The tract at residues 1 to 89 (MSVCTLSVPV…ILAKKFSKDL (89 aa)) is required for nucleolar localization. The BED-type 1 zinc finger occupies 130–187 (AKTSIVWHFFHVDPQYTWRAICNLCEKSVSRGKPGSHLGTSTLQRHLQARHSPHWTRA). Residues Cys151, Cys154, His175, and His180 each coordinate Zn(2+). The tract at residues 207 to 232 (PSSGSNGSFEYIPTDPLDDNRMGKKH) is disordered. The segment at 264 to 321 (AKTSAVWNFFYTDPQHISRAVCNICKRSVSRGRPGSHLGTSTLQRHLQATHPIHWAVA) adopts a BED-type 2 zinc-finger fold. Residues Cys285, Cys288, His309, and His314 each contribute to the Zn(2+) site. The interval 333 to 383 (DEAETERSDLLSDTLHGEKSTGSQDLTAEDLSDSDSDEPMLEVENRSESPI) is disordered. Residues 337–351 (TERSDLLSDTLHGEK) show a composition bias toward basic and acidic residues. Positions 359-373 (TAEDLSDSDSDEPML) are enriched in acidic residues. At Ser381 the chain carries Phosphoserine. Residues 866-948 (VVDEYFKEKY…EQLMFLKMNL (83 aa)) form an HATC (Hobo-Ac-Tam3) domain region.

In terms of tissue distribution, expressed in pancreatic islet cells (at protein level).

The protein localises to the nucleus. The protein resides in the nucleolus. Its subcellular location is the cytoplasm. Transcriptional repressor which binds to the consensus sequence 5'-GCTCGC-3', transcription regulation may be tissue-specific. Regulates the expression of target genes such as: IGF2, PGAP6/TMEM8, ENHO, and PIANP. Acts as a transcriptional repressor of growth factor IGF2, thereby negatively regulating postnatal growth of muscles and internal organs, especially in females. Negatively regulates myoblast differentiation and myoblast mitochondrial activity via its regulation of IGF2 transcription. Negatively regulates the cell cycle of myoblasts, potentially via transcriptional regulation of the E2F family of transcription factors such as: E2F1 and E2F2. Positively regulates the cell cycle and survival of pancreatic beta cells. Binds to the CDH2 gene and may directly repress CDH2 transcription. Probably by controlling CDH2 expression, regulates pancreatic beta cell adhesion, and formation of cell-to-cell junctions between pancreatic beta cells and neural crest stem cells. May also play a role in embryonic beta cell differentiation. May play a role in insulin sensitivity and glucose clearance. In Homo sapiens (Human), this protein is Zinc finger BED domain-containing protein 6.